The primary structure comprises 890 residues: Bacteriocin BCN5 (890 aa).

SH3b domains follow at residues 22–84 (PPNA…TNAT) and 179–241 (ENNA…TNAT). The 247-residue stretch at 303–549 (GYVKYEGAAA…RYLQKIINAV (247 aa)) folds into the Peptidase M14 domain. Positions 358, 361, and 475 each coordinate Zn(2+). Glu525 serves as the catalytic Proton donor/acceptor. Residues 572 to 636 (EATGEVINVQ…VNSGYIIILK (65 aa)) form the SH3b 3 domain. A hydrophobic region spans residues 815–869 (KALAAAVIVNGVETMFCAFLGGFIAQCIAPEFPIVAAVAGAIVSAIAAFAIGYFV).

The cofactor is Zn(2+).

Functionally, may function as an ionophore. The sequence is that of Bacteriocin BCN5 (bcn) from Clostridium perfringens.